Here is a 156-residue protein sequence, read N- to C-terminus: Cytochrome c-type biogenesis protein CcmE 2 (156 aa).

The Cytoplasmic segment spans residues 1–8; it reads MNPQRRRR. A helical; Signal-anchor for type II membrane protein membrane pass occupies residues 9–29; sequence LWWVLALLLAGGLATTLVSMA. The Periplasmic segment spans residues 30–156; sequence LQRNVAYLYT…AAANQGGALR (127 aa). Heme-binding residues include histidine 123 and tyrosine 127. A disordered region spans residues 135-156; the sequence is KMGSAHRKHDVPAAANQGGALR.

It belongs to the CcmE/CycJ family.

Its subcellular location is the cell inner membrane. Heme chaperone required for the biogenesis of c-type cytochromes. Transiently binds heme delivered by CcmC and transfers the heme to apo-cytochromes in a process facilitated by CcmF and CcmH. This Xanthomonas oryzae pv. oryzae (strain MAFF 311018) protein is Cytochrome c-type biogenesis protein CcmE 2.